Reading from the N-terminus, the 160-residue chain is Putative antiporter subunit mnhE2 (160 aa).

The next 3 membrane-spanning stretches (helical) occupy residues 22-42 (SFQF…IYIL), 61-81 (FLGV…NYIL), and 102-122 (WAIT…VIRI).

It belongs to the CPA3 antiporters (TC 2.A.63) subunit E family. As to quaternary structure, may form a heterooligomeric complex that consists of seven subunits: mnhA2, mnhB2, mnhC2, mnhD2, mnhE2, mnhF2 and mnhG2.

It is found in the cell membrane. The protein is Putative antiporter subunit mnhE2 (mnhE2) of Staphylococcus haemolyticus (strain JCSC1435).